The sequence spans 190 residues: Elongation factor P-like protein (190 aa).

This sequence belongs to the elongation factor P family.

The chain is Elongation factor P-like protein from Proteus mirabilis (strain HI4320).